Reading from the N-terminus, the 594-residue chain is Aspartate--tRNA ligase (594 aa).

Glu171 lines the L-aspartate pocket. The aspartate stretch occupies residues 195–198 (QLFK). Position 217 (Arg217) interacts with L-aspartate. Residues 217–219 (RDE) and Gln226 each bind ATP. His449 provides a ligand contact to L-aspartate. ATP is bound at residue Glu483. Arg490 is an L-aspartate binding site. Residue 535–538 (GLDR) participates in ATP binding.

It belongs to the class-II aminoacyl-tRNA synthetase family. Type 1 subfamily. In terms of assembly, homodimer.

The protein resides in the cytoplasm. The catalysed reaction is tRNA(Asp) + L-aspartate + ATP = L-aspartyl-tRNA(Asp) + AMP + diphosphate. In terms of biological role, catalyzes the attachment of L-aspartate to tRNA(Asp) in a two-step reaction: L-aspartate is first activated by ATP to form Asp-AMP and then transferred to the acceptor end of tRNA(Asp). The protein is Aspartate--tRNA ligase of Proteus mirabilis (strain HI4320).